We begin with the raw amino-acid sequence, 237 residues long: Large ribosomal subunit protein uL1 (237 aa).

It belongs to the universal ribosomal protein uL1 family. In terms of assembly, part of the 50S ribosomal subunit.

Functionally, binds directly to 23S rRNA. The L1 stalk is quite mobile in the ribosome, and is involved in E site tRNA release. In terms of biological role, protein L1 is also a translational repressor protein, it controls the translation of the L11 operon by binding to its mRNA. This is Large ribosomal subunit protein uL1 from Chloroflexus aurantiacus (strain ATCC 29364 / DSM 637 / Y-400-fl).